The primary structure comprises 220 residues: Deoxyribose-phosphate aldolase (220 aa).

D89 (proton donor/acceptor) is an active-site residue. The active-site Schiff-base intermediate with acetaldehyde is the K151. The active-site Proton donor/acceptor is K180.

This sequence belongs to the DeoC/FbaB aldolase family. DeoC type 1 subfamily.

Its subcellular location is the cytoplasm. It catalyses the reaction 2-deoxy-D-ribose 5-phosphate = D-glyceraldehyde 3-phosphate + acetaldehyde. Its pathway is carbohydrate degradation; 2-deoxy-D-ribose 1-phosphate degradation; D-glyceraldehyde 3-phosphate and acetaldehyde from 2-deoxy-alpha-D-ribose 1-phosphate: step 2/2. In terms of biological role, catalyzes a reversible aldol reaction between acetaldehyde and D-glyceraldehyde 3-phosphate to generate 2-deoxy-D-ribose 5-phosphate. This Streptococcus sanguinis (strain SK36) protein is Deoxyribose-phosphate aldolase.